Reading from the N-terminus, the 90-residue chain is Gene 56 protein (90 aa).

One can recognise a Glutaredoxin domain in the interval M1–L90. A disulfide bond links C16 and C19.

In Mycobacterium phage D29 (Mycobacteriophage D29), this protein is Gene 56 protein (56).